The following is a 176-amino-acid chain: ATP synthase subunit b (176 aa).

A helical membrane pass occupies residues 24 to 43 (FAFRVVNFVIFAGIIWKAAG).

It belongs to the ATPase B chain family. F-type ATPases have 2 components, F(1) - the catalytic core - and F(0) - the membrane proton channel. F(1) has five subunits: alpha(3), beta(3), gamma(1), delta(1), epsilon(1). F(0) has three main subunits: a(1), b(2) and c(10-14). The alpha and beta chains form an alternating ring which encloses part of the gamma chain. F(1) is attached to F(0) by a central stalk formed by the gamma and epsilon chains, while a peripheral stalk is formed by the delta and b chains.

The protein localises to the cell inner membrane. In terms of biological role, f(1)F(0) ATP synthase produces ATP from ADP in the presence of a proton or sodium gradient. F-type ATPases consist of two structural domains, F(1) containing the extramembraneous catalytic core and F(0) containing the membrane proton channel, linked together by a central stalk and a peripheral stalk. During catalysis, ATP synthesis in the catalytic domain of F(1) is coupled via a rotary mechanism of the central stalk subunits to proton translocation. Component of the F(0) channel, it forms part of the peripheral stalk, linking F(1) to F(0). The polypeptide is ATP synthase subunit b (Nitratidesulfovibrio vulgaris (strain ATCC 29579 / DSM 644 / CCUG 34227 / NCIMB 8303 / VKM B-1760 / Hildenborough) (Desulfovibrio vulgaris)).